A 421-amino-acid chain; its full sequence is Glucose-1-phosphate adenylyltransferase (421 aa).

Residues Y108, G173, 188–189 (EK), and S206 each bind alpha-D-glucose 1-phosphate.

The protein belongs to the bacterial/plant glucose-1-phosphate adenylyltransferase family. In terms of assembly, homotetramer.

It carries out the reaction alpha-D-glucose 1-phosphate + ATP + H(+) = ADP-alpha-D-glucose + diphosphate. It functions in the pathway glycan biosynthesis; glycogen biosynthesis. Its function is as follows. Involved in the biosynthesis of ADP-glucose, a building block required for the elongation reactions to produce glycogen. Catalyzes the reaction between ATP and alpha-D-glucose 1-phosphate (G1P) to produce pyrophosphate and ADP-Glc. This Mesorhizobium japonicum (strain LMG 29417 / CECT 9101 / MAFF 303099) (Mesorhizobium loti (strain MAFF 303099)) protein is Glucose-1-phosphate adenylyltransferase.